Reading from the N-terminus, the 159-residue chain is Mitotic-spindle organizing protein 2 (159 aa).

Positions L87–P159 are disordered. Residues P91–E105 are compositionally biased toward polar residues. R111 is modified (omega-N-methylarginine). Phosphoserine is present on S153.

This sequence belongs to the MOZART2 family. Associates with the gamma-tubulin ring complex (gTuRC) consisting of TUBGCP2, TUBGCP3, TUBGCP4, TUBGCP5 and TUBGCP6 and gamma-tubulin TUBG1 or TUBG2; within the complex, interacts with TUBGCP2; the interaction plays a role in gTuRC activation.

It is found in the cytoplasm. The protein resides in the cytoskeleton. It localises to the microtubule organizing center. The protein localises to the centrosome. Its subcellular location is the spindle. Required for the recruitment and the assembly of the gamma-tubulin ring complex (gTuRC) at the centrosome. The gTuRC regulates the minus-end nucleation of alpha-beta tubulin heterodimers that grow into microtubule protafilaments, a critical step in centrosome duplication and spindle formation. The sequence is that of Mitotic-spindle organizing protein 2 (Mzt2) from Mus musculus (Mouse).